The primary structure comprises 310 residues: 4-hydroxyproline 2-epimerase (310 aa).

C88 functions as the Proton acceptor in the catalytic mechanism. Residues G89–H90, H208, and D232 contribute to the substrate site. C236 functions as the Proton donor in the catalytic mechanism. G237–T238 provides a ligand contact to substrate.

The protein belongs to the proline racemase family.

It carries out the reaction trans-4-hydroxy-L-proline = cis-4-hydroxy-D-proline. Its function is as follows. Catalyzes the epimerization of trans-4-hydroxy-L-proline (t4LHyp) to cis-4-hydroxy-D-proline (c4DHyp). Is likely involved in a degradation pathway that converts t4LHyp to alpha-ketoglutarate. Can also catalyze the dehydration of trans-3-hydroxy-L-proline (t3LHyp) to Delta(1)-pyrroline-2-carboxylate (Pyr2C), albeit with 42-fold lower efficiency. Displays no proline racemase activity. This chain is 4-hydroxyproline 2-epimerase, found in Burkholderia thailandensis (strain ATCC 700388 / DSM 13276 / CCUG 48851 / CIP 106301 / E264).